Consider the following 109-residue polypeptide: uncharacterized protein (109 aa).

Residues Trp87 to Met106 traverse the membrane as a helical segment.

The protein belongs to the ElaB/YgaM/YqjD family. May bind to ribosomes.

The protein localises to the cell inner membrane. This is an uncharacterized protein from Escherichia coli O157:H7.